Here is a 133-residue protein sequence, read N- to C-terminus: Small ribosomal subunit protein uS8 (133 aa).

It belongs to the universal ribosomal protein uS8 family. As to quaternary structure, part of the 30S ribosomal subunit. Contacts proteins S5 and S12.

One of the primary rRNA binding proteins, it binds directly to 16S rRNA central domain where it helps coordinate assembly of the platform of the 30S subunit. This is Small ribosomal subunit protein uS8 from Prochlorococcus marinus (strain MIT 9313).